Reading from the N-terminus, the 365-residue chain is Putative fatty acid elongase 2 (365 aa).

The Lumenal portion of the chain corresponds to 1-68; the sequence is MPDSPTLHHN…SFEFIVNKTR (68 aa). Residues N17 and N65 are each glycosylated (N-linked (GlcNAc...) asparagine). The helical transmembrane segment at 69–89 threads the bilayer; sequence FSSAPVVATIIISYYLLILVG. Residues 90-111 lie on the Cytoplasmic side of the membrane; the sequence is GRIMRNRQPIRLQKIFQYYNLT. The chain crosses the membrane as a helical span at residues 112-132; that stretch reads FSIASAILALLIFEQVAPAIY. Residues 133 to 149 are Lumenal-facing; the sequence is KHGFFFSICNEKAWTQP. The helical transmembrane segment at 150–170 threads the bilayer; sequence LVFLYYCAYISKFLELTDTFF. At 171–179 the chain is on the cytoplasmic side; the sequence is LVLRKKPLQ. The chain crosses the membrane as a helical span at residues 180–198; that stretch reads FLHCYHHGATAVLVYTQIV. The Lumenal portion of the chain corresponds to 199-204; it reads GRTSIS. The helical transmembrane segment at 205 to 225 threads the bilayer; sequence WLIIEINLLVHVTMYYYYYLV. The Cytoplasmic portion of the chain corresponds to 226-241; the sequence is AKGIRVPWKKWVTRFQ. A helical membrane pass occupies residues 242–262; it reads IVQFFADLGFIYFAVYTEVAY. Residues 263-278 lie on the Lumenal side of the membrane; sequence RLKFYKACMGHCSGHP. Residues 279 to 299 form a helical membrane-spanning segment; sequence LAAFCGLATISSYLVLFIVFY. Over 300 to 365 the chain is Cytoplasmic; the sequence is HNTYKKNAAL…PISSGLNNEK (66 aa).

This sequence belongs to the ELO family.

It is found in the endoplasmic reticulum membrane. The enzyme catalyses a very-long-chain acyl-CoA + malonyl-CoA + H(+) = a very-long-chain 3-oxoacyl-CoA + CO2 + CoA. May be involved in the synthesis of very long chain fatty acids. In Schizosaccharomyces pombe (strain 972 / ATCC 24843) (Fission yeast), this protein is Putative fatty acid elongase 2.